A 229-amino-acid chain; its full sequence is Lytic polysaccharide monooxygenase-like protein ham-7 (229 aa).

The N-terminal stretch at 1-17 (MLTSTLLALASAALASA) is a signal peptide. His-18 serves as a coordination point for Cu(2+). 2 disulfide bridges follow: Cys-47–Cys-157 and Cys-122–Cys-178. N-linked (GlcNAc...) asparagine glycosylation is found at Asn-55, Asn-98, Asn-139, Asn-174, and Asn-180. A lipid anchor (GPI-anchor amidated serine) is attached at Ser-206. The propeptide at 207-229 (AAASLARMAGWVPLVAGGLWLML) is removed in mature form.

Belongs to the X325 family. It depends on Cu(2+) as a cofactor.

It localises to the cell membrane. Functionally, lytic polysaccharide monooxygenase-like protein that has diverged to biological functions other than polysaccharide degradation since it does not perform oxidative cleavage of polysaccharides. Acts as the major cell wall sensor that regulates MAK-1-dependent hyphal anastomosis, the fusion of hyphal cells. May also act as a cell surface-bound protein that functions in the copper-accumulation pathway. The sequence is that of Lytic polysaccharide monooxygenase-like protein ham-7 from Neurospora crassa (strain ATCC 24698 / 74-OR23-1A / CBS 708.71 / DSM 1257 / FGSC 987).